Here is a 664-residue protein sequence, read N- to C-terminus: DNA ligase (664 aa).

NAD(+) contacts are provided by residues 30-34 (DFEFD), 79-80 (SL), and glutamate 109. Residue lysine 111 is the N6-AMP-lysine intermediate of the active site. Residues arginine 132, glutamate 169, lysine 284, and lysine 308 each contribute to the NAD(+) site. Residues cysteine 403, cysteine 406, cysteine 421, and cysteine 427 each coordinate Zn(2+). One can recognise a BRCT domain in the interval 586–664 (NRSEKLKGLT…NEDAFLNMLE (79 aa)).

It belongs to the NAD-dependent DNA ligase family. LigA subfamily. Mg(2+) serves as cofactor. Mn(2+) is required as a cofactor.

The enzyme catalyses NAD(+) + (deoxyribonucleotide)n-3'-hydroxyl + 5'-phospho-(deoxyribonucleotide)m = (deoxyribonucleotide)n+m + AMP + beta-nicotinamide D-nucleotide.. In terms of biological role, DNA ligase that catalyzes the formation of phosphodiester linkages between 5'-phosphoryl and 3'-hydroxyl groups in double-stranded DNA using NAD as a coenzyme and as the energy source for the reaction. It is essential for DNA replication and repair of damaged DNA. This Parabacteroides distasonis (strain ATCC 8503 / DSM 20701 / CIP 104284 / JCM 5825 / NCTC 11152) protein is DNA ligase.